The primary structure comprises 64 residues: Large ribosomal subunit protein bL35 (64 aa).

Composition is skewed to basic residues over residues 1–15 (MPKQ…KRFR) and 23–43 (VRQK…RTRR). Residues 1–64 (MPKQKSHSGA…AGRIKRLLAR (64 aa)) are disordered.

It belongs to the bacterial ribosomal protein bL35 family.

In Frankia alni (strain DSM 45986 / CECT 9034 / ACN14a), this protein is Large ribosomal subunit protein bL35.